Reading from the N-terminus, the 585-residue chain is RNA polymerase sigma factor RpoD (585 aa).

The tract at residues 67 to 93 (PASTLVPKDDSKPARKKKESSASTSGS) is disordered. The interval 351–421 (LVKANLRLVV…TRAISDQART (71 aa)) is sigma-70 factor domain-2. The Interaction with polymerase core subunit RpoC signature appears at 375–378 (DLIQ). A sigma-70 factor domain-3 region spans residues 430 to 506 (EQVNKVIRET…DTEVETPVNA (77 aa)). The interval 519–572 (VLHTLPAREQKVIRMRFGLDDGYPQTLEEVGYQFKVTRERIRQIEAKALRRLRH) is sigma-70 factor domain-4. The H-T-H motif DNA-binding region spans 545 to 564 (LEEVGYQFKVTRERIRQIEA).

It belongs to the sigma-70 factor family. RpoD/SigA subfamily. Interacts transiently with the RNA polymerase catalytic core.

It localises to the cytoplasm. In terms of biological role, sigma factors are initiation factors that promote the attachment of RNA polymerase to specific initiation sites and are then released. This sigma factor is the primary sigma factor during exponential growth. This chain is RNA polymerase sigma factor RpoD, found in Leptospira interrogans serogroup Icterohaemorrhagiae serovar copenhageni (strain Fiocruz L1-130).